Consider the following 89-residue polypeptide: Small ribosomal subunit protein uS15 (89 aa).

It belongs to the universal ribosomal protein uS15 family. In terms of assembly, part of the 30S ribosomal subunit. Forms a bridge to the 50S subunit in the 70S ribosome, contacting the 23S rRNA.

One of the primary rRNA binding proteins, it binds directly to 16S rRNA where it helps nucleate assembly of the platform of the 30S subunit by binding and bridging several RNA helices of the 16S rRNA. Its function is as follows. Forms an intersubunit bridge (bridge B4) with the 23S rRNA of the 50S subunit in the ribosome. This is Small ribosomal subunit protein uS15 from Chlorobaculum parvum (strain DSM 263 / NCIMB 8327) (Chlorobium vibrioforme subsp. thiosulfatophilum).